Consider the following 100-residue polypeptide: Large ribosomal subunit protein eL36B (100 aa).

This sequence belongs to the eukaryotic ribosomal protein eL36 family. Component of the large ribosomal subunit (LSU). Mature yeast ribosomes consist of a small (40S) and a large (60S) subunit. The 40S small subunit contains 1 molecule of ribosomal RNA (18S rRNA) and 33 different proteins (encoded by 57 genes). The large 60S subunit contains 3 rRNA molecules (25S, 5.8S and 5S rRNA) and 46 different proteins (encoded by 81 genes).

Its subcellular location is the cytoplasm. Functionally, component of the ribosome, a large ribonucleoprotein complex responsible for the synthesis of proteins in the cell. The small ribosomal subunit (SSU) binds messenger RNAs (mRNAs) and translates the encoded message by selecting cognate aminoacyl-transfer RNA (tRNA) molecules. The large subunit (LSU) contains the ribosomal catalytic site termed the peptidyl transferase center (PTC), which catalyzes the formation of peptide bonds, thereby polymerizing the amino acids delivered by tRNAs into a polypeptide chain. The nascent polypeptides leave the ribosome through a tunnel in the LSU and interact with protein factors that function in enzymatic processing, targeting, and the membrane insertion of nascent chains at the exit of the ribosomal tunnel. The polypeptide is Large ribosomal subunit protein eL36B (Saccharomyces cerevisiae (strain ATCC 204508 / S288c) (Baker's yeast)).